The primary structure comprises 99 residues: MNKRKQKQISRILAAKRAEKCGQINAELQETGEYLEGRVHLLRAKLSINGINLKAYVLEQVINIKHQIVTERFGNVLLGLASGMIGGIIGMFMWVLCIL.

Residues 76-96 (VLLGLASGMIGGIIGMFMWVL) form a helical membrane-spanning segment.

The protein resides in the host membrane. This is an uncharacterized protein from Haemophilus phage HP1 (strain HP1c1) (Bacteriophage HP1).